The sequence spans 231 residues: Septum site-determining protein MinC (231 aa).

It belongs to the MinC family. As to quaternary structure, interacts with MinD and FtsZ.

Its function is as follows. Cell division inhibitor that blocks the formation of polar Z ring septums. Rapidly oscillates between the poles of the cell to destabilize FtsZ filaments that have formed before they mature into polar Z rings. Prevents FtsZ polymerization. This is Septum site-determining protein MinC from Shigella flexneri.